The primary structure comprises 314 residues: 1-aminocyclopropane-1-carboxylate oxidase 1 (314 aa).

The Fe2OG dioxygenase domain occupies Pro-153–Pro-253. His-177, Asp-179, and His-234 together coordinate Fe cation.

Belongs to the iron/ascorbate-dependent oxidoreductase family. In terms of assembly, monomer. Fe cation is required as a cofactor.

The enzyme catalyses 1-aminocyclopropane-1-carboxylate + L-ascorbate + O2 = ethene + L-dehydroascorbate + hydrogen cyanide + CO2 + 2 H2O. It participates in alkene biosynthesis; ethylene biosynthesis via S-adenosyl-L-methionine; ethylene from S-adenosyl-L-methionine: step 2/2. The sequence is that of 1-aminocyclopropane-1-carboxylate oxidase 1 from Malus domestica (Apple).